Reading from the N-terminus, the 323-residue chain is tRNA dimethylallyltransferase (323 aa).

12 to 19 contacts ATP; it reads GPTAAGKT. 14 to 19 serves as a coordination point for substrate; that stretch reads TAAGKT. Interaction with substrate tRNA regions lie at residues 37–40 and 161–165; these read DSAL and QRLMR.

Belongs to the IPP transferase family. In terms of assembly, monomer. The cofactor is Mg(2+).

It carries out the reaction adenosine(37) in tRNA + dimethylallyl diphosphate = N(6)-dimethylallyladenosine(37) in tRNA + diphosphate. In terms of biological role, catalyzes the transfer of a dimethylallyl group onto the adenine at position 37 in tRNAs that read codons beginning with uridine, leading to the formation of N6-(dimethylallyl)adenosine (i(6)A). This chain is tRNA dimethylallyltransferase, found in Pseudomonas aeruginosa (strain LESB58).